The primary structure comprises 674 residues: DNA ligase (674 aa).

NAD(+) contacts are provided by residues aspartate 34–aspartate 38, serine 84–leucine 85, and glutamate 116. The active-site N6-AMP-lysine intermediate is lysine 118. NAD(+)-binding residues include arginine 139, glutamate 174, lysine 291, and lysine 315. Residues cysteine 409, cysteine 412, cysteine 425, and cysteine 430 each coordinate Zn(2+). Residues arginine 586 to serine 674 enclose the BRCT domain.

It belongs to the NAD-dependent DNA ligase family. LigA subfamily. Requires Mg(2+) as cofactor. Mn(2+) serves as cofactor.

The catalysed reaction is NAD(+) + (deoxyribonucleotide)n-3'-hydroxyl + 5'-phospho-(deoxyribonucleotide)m = (deoxyribonucleotide)n+m + AMP + beta-nicotinamide D-nucleotide.. In terms of biological role, DNA ligase that catalyzes the formation of phosphodiester linkages between 5'-phosphoryl and 3'-hydroxyl groups in double-stranded DNA using NAD as a coenzyme and as the energy source for the reaction. It is essential for DNA replication and repair of damaged DNA. This is DNA ligase from Thermus scotoductus.